Reading from the N-terminus, the 344-residue chain is Dihydroorotase (344 aa).

His-13 and His-15 together coordinate Zn(2+). Substrate-binding positions include 15–17 (HLR) and Asn-41. Zn(2+)-binding residues include Lys-98, His-135, and His-173. An N6-carboxylysine modification is found at Lys-98. His-135 lines the substrate pocket. Leu-218 contributes to the substrate binding site. Asp-247 is a binding site for Zn(2+). Residue Asp-247 is part of the active site. Substrate contacts are provided by His-251 and Ala-263.

This sequence belongs to the metallo-dependent hydrolases superfamily. DHOase family. Class II DHOase subfamily. Homodimer. The cofactor is Zn(2+).

It carries out the reaction (S)-dihydroorotate + H2O = N-carbamoyl-L-aspartate + H(+). It functions in the pathway pyrimidine metabolism; UMP biosynthesis via de novo pathway; (S)-dihydroorotate from bicarbonate: step 3/3. Catalyzes the reversible cyclization of carbamoyl aspartate to dihydroorotate. The sequence is that of Dihydroorotase from Neisseria meningitidis serogroup C / serotype 2a (strain ATCC 700532 / DSM 15464 / FAM18).